We begin with the raw amino-acid sequence, 675 residues long: Polyphosphate kinase (675 aa).

ATP is bound at residue Asn-42. Mg(2+) contacts are provided by Arg-372 and Arg-401. His-431 functions as the Phosphohistidine intermediate in the catalytic mechanism. ATP-binding residues include Tyr-464, Arg-558, and His-586.

The protein belongs to the polyphosphate kinase 1 (PPK1) family. It depends on Mg(2+) as a cofactor. An intermediate of this reaction is the autophosphorylated ppk in which a phosphate is covalently linked to a histidine residue through a N-P bond.

It carries out the reaction [phosphate](n) + ATP = [phosphate](n+1) + ADP. In terms of biological role, catalyzes the reversible transfer of the terminal phosphate of ATP to form a long-chain polyphosphate (polyP). This chain is Polyphosphate kinase, found in Helicobacter pylori (strain J99 / ATCC 700824) (Campylobacter pylori J99).